A 142-amino-acid chain; its full sequence is Small ribosomal subunit protein uS9 (142 aa).

It belongs to the universal ribosomal protein uS9 family.

The protein resides in the cytoplasm. The chain is Small ribosomal subunit protein uS9 (RPS16) from Syntrichia ruralis (Great hairy screw-moss).